A 260-amino-acid chain; its full sequence is Pyridoxine 5'-phosphate synthase (260 aa).

3-amino-2-oxopropyl phosphate is bound at residue Asn-15. 17-18 is a binding site for 1-deoxy-D-xylulose 5-phosphate; it reads DH. 3-amino-2-oxopropyl phosphate is bound at residue Arg-26. Catalysis depends on His-51, which acts as the Proton acceptor. 1-deoxy-D-xylulose 5-phosphate contacts are provided by Arg-53 and His-58. Residue Glu-78 is the Proton acceptor of the active site. Thr-108 is a 1-deoxy-D-xylulose 5-phosphate binding site. The Proton donor role is filled by His-199. 3-amino-2-oxopropyl phosphate is bound by residues Gly-200 and 221-222; that span reads GH.

It belongs to the PNP synthase family. In terms of assembly, homooctamer; tetramer of dimers.

Its subcellular location is the cytoplasm. It catalyses the reaction 3-amino-2-oxopropyl phosphate + 1-deoxy-D-xylulose 5-phosphate = pyridoxine 5'-phosphate + phosphate + 2 H2O + H(+). The protein operates within cofactor biosynthesis; pyridoxine 5'-phosphate biosynthesis; pyridoxine 5'-phosphate from D-erythrose 4-phosphate: step 5/5. In terms of biological role, catalyzes the complicated ring closure reaction between the two acyclic compounds 1-deoxy-D-xylulose-5-phosphate (DXP) and 3-amino-2-oxopropyl phosphate (1-amino-acetone-3-phosphate or AAP) to form pyridoxine 5'-phosphate (PNP) and inorganic phosphate. The polypeptide is Pyridoxine 5'-phosphate synthase (Cupriavidus necator (strain ATCC 17699 / DSM 428 / KCTC 22496 / NCIMB 10442 / H16 / Stanier 337) (Ralstonia eutropha)).